The primary structure comprises 109 residues: Polyprenyl transferase subC (109 aa).

The next 2 membrane-spanning stretches (helical) occupy residues 39–59 (LFCV…NDWI) and 84–104 (QAFV…HVML).

Belongs to the UbiA prenyltransferase family. Mg(2+) is required as a cofactor.

Its subcellular location is the membrane. It participates in secondary metabolite biosynthesis; terpenoid biosynthesis. Polyprenyl transferase; part of the gene cluster that mediates the biosynthesis of the immunosuppressants subglutinols, meroterpenoids consisting of an alpha-pyrone (4-hydroxy-5,6-dimethyl-2-pyrone) moiety attached to a decalin core fused to a five-membered cyclic ether carrying a prenylside chain. The first step of the pathway is the synthesis of the alpha-pyrone moiety by the polyketide synthase subA via condensation of one acetyl-CoA starter unit with 3 malonyl-CoA units and 2 methylations. The alpha-pyrone is then combined with geranylgeranyl pyrophosphate (GGPP) formed by the GGPP synthase subD through the action of the prenyltransferase subC to yield a linear alpha-pyrone diterpenoid. Subsequent steps in the subglutinol biosynthetic pathway involve the decalin core formation, which is thought to be initiated by the epoxidation of the C10-C11 olefin by the FAD-dependent oxidoreductase subE. The following cyclization cascade would be catalyzed by the terpene cyclase subB. Lastly, the FAD-dependent dehydrogenase subF probably catalyzes the five-membered cyclic ether formation to complete the formation of subglutinol A. Subsequent redox reactions appear to give rise to subglutinol C and D, however, it remains unclear which enzymes are responsible for these transformations. SubD may have secondary function in the conversion of the identified subglutinols to subglutinol analog 45, which seems to be the major product of the cluster. The sequence is that of Polyprenyl transferase subC from Metarhizium robertsii (strain ARSEF 23 / ATCC MYA-3075) (Metarhizium anisopliae (strain ARSEF 23)).